Reading from the N-terminus, the 144-residue chain is Putative pre-16S rRNA nuclease (144 aa).

It belongs to the YqgF nuclease family.

Its subcellular location is the cytoplasm. Its function is as follows. Could be a nuclease involved in processing of the 5'-end of pre-16S rRNA. This Oenococcus oeni (strain ATCC BAA-331 / PSU-1) protein is Putative pre-16S rRNA nuclease.